Here is a 145-residue protein sequence, read N- to C-terminus: D-aminoacyl-tRNA deacylase (145 aa).

The short motif at 137–138 (GP) is the Gly-cisPro motif, important for rejection of L-amino acids element.

This sequence belongs to the DTD family. Homodimer.

The protein resides in the cytoplasm. The catalysed reaction is glycyl-tRNA(Ala) + H2O = tRNA(Ala) + glycine + H(+). The enzyme catalyses a D-aminoacyl-tRNA + H2O = a tRNA + a D-alpha-amino acid + H(+). In terms of biological role, an aminoacyl-tRNA editing enzyme that deacylates mischarged D-aminoacyl-tRNAs. Also deacylates mischarged glycyl-tRNA(Ala), protecting cells against glycine mischarging by AlaRS. Acts via tRNA-based rather than protein-based catalysis; rejects L-amino acids rather than detecting D-amino acids in the active site. By recycling D-aminoacyl-tRNA to D-amino acids and free tRNA molecules, this enzyme counteracts the toxicity associated with the formation of D-aminoacyl-tRNA entities in vivo and helps enforce protein L-homochirality. The protein is D-aminoacyl-tRNA deacylase of Shewanella baltica (strain OS223).